Reading from the N-terminus, the 389-residue chain is MAEPDPSHPLETQAGKVQEAQDSDSDSEGGAAGGEADMDFLRNLFSQTLSLGSQKERLLDELTLEGVARYMQSERCRRVICLVGAGISTSAGIPDFRSPSTGLYDNLEKYHLPYPEAIFEISYFKKHPEPFFALAKELYPGQFKPTICHYFMRLLKDKGLLLRCYTQNIDTLERIAGLEQEDLVEAHGTFYTSHCVSASCRHEYPLSWMKEKIFSEVTPKCEDCQSLVKPDIVFFGESLPARFFSCMQSDFLKVDLLLVMGTSLQVQPFASLISKAPLSTPRLLINKEKAGQSDPFLGMIMGLGGGMDFDSKKAYRDVAWLGECDQGCLALAELLGWKKELEDLVRREHASIDAQSGAGVPNPSTSASPKKSPPPAKDEARTTEREKPQ.

The interval 1–34 is disordered; the sequence is MAEPDPSHPLETQAGKVQEAQDSDSDSEGGAAGG. Residue Ala-2 is modified to N-acetylalanine. Ser-23, Ser-25, and Ser-27 each carry phosphoserine. The short motif at 41–51 is the Nuclear export signal element; that stretch reads LRNLFSQTLSL. Ser-53 is modified (phosphoserine). In terms of domain architecture, Deacetylase sirtuin-type spans 57–338; that stretch reads RLLDELTLEG…LALAELLGWK (282 aa). NAD(+) contacts are provided by residues 85 to 89 and 95 to 97; these read AGIST and DFR. Position 100 is a phosphoserine (Ser-100). Position 167–170 (167–170) interacts with NAD(+); sequence QNID. The Proton acceptor role is filled by His-187. 2 residues coordinate Zn(2+): Cys-195 and Cys-200. Phosphoserine is present on Ser-207. Residues Cys-221 and Cys-224 each contribute to the Zn(2+) site. Residues 262 to 263, 286 to 288, and Cys-324 each bind NAD(+); these read TS and NKE. Positions 351–389 are disordered; it reads SIDAQSGAGVPNPSTSASPKKSPPPAKDEARTTEREKPQ. Residues 361–370 are compositionally biased toward low complexity; it reads PNPSTSASPK. At Ser-368 the chain carries Phosphoserine; by CDK2 and CDK5. Position 372 is a phosphoserine (Ser-372). Residues 376-389 are compositionally biased toward basic and acidic residues; it reads AKDEARTTEREKPQ.

This sequence belongs to the sirtuin family. Class I subfamily. In terms of assembly, interacts with CDC20, FOXO3 and FZR1. Associates with microtubules in primary cortical mature neurons. Homotrimer. Isoform 1 and isoform 2 interact (via both phosphorylated, unphosphorylated, active or inactive forms) with HDAC6; the interaction is necessary for the complex to interact with alpha-tubulin, suggesting that these proteins belong to a large complex that deacetylates the cytoskeleton. Interacts with FOXO1; the interaction is disrupted upon serum-starvation or oxidative stress, leading to increased level of acetylated FOXO1 and induction of autophagy. Interacts with RELA; the interaction occurs in the cytoplasm and is increased in a TNF-alpha-dependent manner. Interacts with HOXA10; the interaction is direct. Interacts with YWHAB and YWHAG; the interactions occur in a AKT-dependent manner and increase SIRT2-dependent TP53 deacetylation. Interacts with MAPK1/ERK2 and MAPK3/ERK1; the interactions increase SIRT2 stability and deacetylation activity. Interacts (phosphorylated form) with KMT5A isoform 2; the interaction is direct, stimulates KMT5A-mediated methyltransferase activity on histone at 'Lys-20' (H4K20me1) and is increased in a H(2)O(2)-induced oxidative stress-dependent manner. Interacts with G6PD; the interaction is enhanced by H(2)O(2) treatment. Interacts with a G1/S-specific cyclin E-CDK2 complex. Interacts with AURKA, CDK5R1 (p35 form) and CDK5 and HIF1A. Isoform 1, isoform 2 and isoform 5 interact (via C-terminus region) with EP300. Interacts with the tRNA ligase SARS1; recruited to the VEGFA promoter via interaction with SARS1. Interacts with BEX4; negatively regulates alpha-tubulin deacetylation by SIRT2. Zn(2+) is required as a cofactor. Phosphorylated at phosphoserine and phosphothreonine. Phosphorylated at Ser-368 by a mitotic kinase CDK1/cyclin B at the G2/M transition; phosphorylation regulates the delay in cell-cycle progression. Phosphorylated at Ser-368 by a mitotic kinase G1/S-specific cyclin E/Cdk2 complex; phosphorylation inactivates SIRT2-mediated alpha-tubulin deacetylation and thereby negatively regulates cell adhesion, cell migration and neurite outgrowth during neuronal differentiation. Phosphorylated by cyclin A/Cdk2 and p35-Cdk5 complexes and to a lesser extent by the cyclin D3/Cdk4 and cyclin B/Cdk1, in vitro. Dephosphorylated at Ser-368 by CDC14A and CDC14B around early anaphase. Post-translationally, acetylated by EP300; acetylation leads both to the decreased of SIRT2-mediated alpha-tubulin deacetylase activity and SIRT2-mediated down-regulation of TP53 transcriptional activity. In terms of processing, ubiquitinated. In terms of tissue distribution, isoform 1 is expressed in heart, liver and skeletal muscle, weakly expressed in the cortex. Isoform 2 is strongly expressed in the cortex, weakly expressed in heart and liver. Weakly expressed in several malignancies including breast, liver, brain, kidney and prostate cancers compared to normal tissues. Weakly expressed in glioma cell lines compared to normal brain tissues (at protein level). Widely expressed. Highly expressed in heart, brain and skeletal muscle, while it is weakly expressed in placenta and lung. Down-regulated in many gliomas suggesting that it may act as a tumor suppressor gene in human gliomas possibly through the regulation of microtubule network.

It is found in the nucleus. The protein resides in the cytoplasm. The protein localises to the perinuclear region. Its subcellular location is the cytoskeleton. It localises to the microtubule organizing center. It is found in the centrosome. The protein resides in the centriole. The protein localises to the spindle. Its subcellular location is the midbody. It localises to the chromosome. It is found in the perikaryon. The protein resides in the cell projection. The protein localises to the growth cone. Its subcellular location is the myelin membrane. The enzyme catalyses N(6)-acetyl-L-lysyl-[protein] + NAD(+) + H2O = 2''-O-acetyl-ADP-D-ribose + nicotinamide + L-lysyl-[protein]. It carries out the reaction N(6)-tetradecanoyl-L-lysyl-[protein] + NAD(+) + H2O = 2''-O-tetradecanoyl-ADP-D-ribose + nicotinamide + L-lysyl-[protein]. The catalysed reaction is N(6)-hexadecanoyl-L-lysyl-[protein] + NAD(+) + H2O = 2''-O-hexadecanoyl-ADP-D-ribose + nicotinamide + L-lysyl-[protein]. With respect to regulation, inhibited by Sirtinol, A3 and M15 small molecules. Inhibited by nicotinamide. Inhibited by a macrocyclic peptide inhibitor S2iL5. Inhibited by EP300-induced acetylation. Functionally, NAD-dependent protein deacetylase, which deacetylates internal lysines on histone and alpha-tubulin as well as many other proteins such as key transcription factors. Participates in the modulation of multiple and diverse biological processes such as cell cycle control, genomic integrity, microtubule dynamics, cell differentiation, metabolic networks, and autophagy. Plays a major role in the control of cell cycle progression and genomic stability. Functions in the antephase checkpoint preventing precocious mitotic entry in response to microtubule stress agents, and hence allowing proper inheritance of chromosomes. Positively regulates the anaphase promoting complex/cyclosome (APC/C) ubiquitin ligase complex activity by deacetylating CDC20 and FZR1, then allowing progression through mitosis. Associates both with chromatin at transcriptional start sites (TSSs) and enhancers of active genes. Plays a role in cell cycle and chromatin compaction through epigenetic modulation of the regulation of histone H4 'Lys-20' methylation (H4K20me1) during early mitosis. Specifically deacetylates histone H4 at 'Lys-16' (H4K16ac) between the G2/M transition and metaphase enabling H4K20me1 deposition by KMT5A leading to ulterior levels of H4K20me2 and H4K20me3 deposition throughout cell cycle, and mitotic S-phase progression. Deacetylates KMT5A modulating KMT5A chromatin localization during the mitotic stress response. Also deacetylates histone H3 at 'Lys-57' (H3K56ac) during the mitotic G2/M transition. Upon bacterium Listeria monocytogenes infection, deacetylates 'Lys-18' of histone H3 in a receptor tyrosine kinase MET- and PI3K/Akt-dependent manner, thereby inhibiting transcriptional activity and promoting late stages of listeria infection. During oocyte meiosis progression, may deacetylate histone H4 at 'Lys-16' (H4K16ac) and alpha-tubulin, regulating spindle assembly and chromosome alignment by influencing microtubule dynamics and kinetochore function. Deacetylates histone H4 at 'Lys-16' (H4K16ac) at the VEGFA promoter and thereby contributes to regulate expression of VEGFA, a key regulator of angiogenesis. Deacetylates alpha-tubulin at 'Lys-40' and hence controls neuronal motility, oligodendroglial cell arbor projection processes and proliferation of non-neuronal cells. Phosphorylation at Ser-368 by a G1/S-specific cyclin E-CDK2 complex inactivates SIRT2-mediated alpha-tubulin deacetylation, negatively regulating cell adhesion, cell migration and neurite outgrowth during neuronal differentiation. Deacetylates PARD3 and participates in the regulation of Schwann cell peripheral myelination formation during early postnatal development and during postinjury remyelination. Involved in several cellular metabolic pathways. Plays a role in the regulation of blood glucose homeostasis by deacetylating and stabilizing phosphoenolpyruvate carboxykinase PCK1 activity in response to low nutrient availability. Acts as a key regulator in the pentose phosphate pathway (PPP) by deacetylating and activating the glucose-6-phosphate G6PD enzyme, and therefore, stimulates the production of cytosolic NADPH to counteract oxidative damage. Maintains energy homeostasis in response to nutrient deprivation as well as energy expenditure by inhibiting adipogenesis and promoting lipolysis. Attenuates adipocyte differentiation by deacetylating and promoting FOXO1 interaction to PPARG and subsequent repression of PPARG-dependent transcriptional activity. Plays a role in the regulation of lysosome-mediated degradation of protein aggregates by autophagy in neuronal cells. Deacetylates FOXO1 in response to oxidative stress or serum deprivation, thereby negatively regulating FOXO1-mediated autophagy. Deacetylates a broad range of transcription factors and co-regulators regulating target gene expression. Deacetylates transcriptional factor FOXO3 stimulating the ubiquitin ligase SCF(SKP2)-mediated FOXO3 ubiquitination and degradation. Deacetylates HIF1A and therefore promotes HIF1A degradation and inhibition of HIF1A transcriptional activity in tumor cells in response to hypoxia. Deacetylates RELA in the cytoplasm inhibiting NF-kappaB-dependent transcription activation upon TNF-alpha stimulation. Inhibits transcriptional activation by deacetylating p53/TP53 and EP300. Also deacetylates EIF5A. Functions as a negative regulator on oxidative stress-tolerance in response to anoxia-reoxygenation conditions. Plays a role as tumor suppressor. In addition to protein deacetylase activity, also has activity toward long-chain fatty acyl groups and mediates protein-lysine demyristoylation and depalmitoylation of target proteins, such as ARF6 and KRAS, thereby regulating their association with membranes. In terms of biological role, deacetylates EP300, alpha-tubulin and histone H3 and H4. Its function is as follows. Lacks deacetylation activity, at least toward known SIRT2 targets. The polypeptide is NAD-dependent protein deacetylase sirtuin-2 (SIRT2) (Homo sapiens (Human)).